The chain runs to 190 residues: dITP/XTP pyrophosphatase (190 aa).

Position 10–15 (10–15) interacts with substrate; sequence TTNKHK. 2 residues coordinate Mg(2+): E39 and D68. D68 serves as the catalytic Proton acceptor. Substrate-binding positions include A69, 143–146, K166, and 171–172; these read FGYD and HR.

Belongs to the HAM1 NTPase family. Homodimer. Requires Mg(2+) as cofactor.

The catalysed reaction is XTP + H2O = XMP + diphosphate + H(+). It catalyses the reaction dITP + H2O = dIMP + diphosphate + H(+). It carries out the reaction ITP + H2O = IMP + diphosphate + H(+). Its function is as follows. Pyrophosphatase that catalyzes the hydrolysis of nucleoside triphosphates to their monophosphate derivatives, with a high preference for the non-canonical purine nucleotides XTP (xanthosine triphosphate), dITP (deoxyinosine triphosphate) and ITP. Seems to function as a house-cleaning enzyme that removes non-canonical purine nucleotides from the nucleotide pool, thus preventing their incorporation into DNA/RNA and avoiding chromosomal lesions. The protein is dITP/XTP pyrophosphatase of Hyperthermus butylicus (strain DSM 5456 / JCM 9403 / PLM1-5).